The chain runs to 639 residues: Uridine permease (639 aa).

Positions Met1 to Ala37 are disordered. Over Met1–Thr162 the chain is Cytoplasmic. Phosphothreonine is present on Thr54. Ser56 carries the post-translational modification Phosphoserine. Residues Trp163 to Gly180 traverse the membrane as a helical segment. Residues Ser181 to Gly200 are Extracellular-facing. The helical transmembrane segment at Ile201–Ile225 threads the bilayer. Residues Gly226–Glu259 are Cytoplasmic-facing. A helical transmembrane segment spans residues Phe260 to Phe276. The Extracellular segment spans residues Pro277–His283. The chain crosses the membrane as a helical span at residues Ile284–Cys305. At Lys306 to Gln367 the chain is on the cytoplasmic side. Residues Leu368 to Leu392 traverse the membrane as a helical segment. The Extracellular portion of the chain corresponds to Tyr393 to Arg416. Residues Ala417–Leu435 form a helical membrane-spanning segment. Topologically, residues Ser436–Ser460 are cytoplasmic. A helical transmembrane segment spans residues Tyr461–Ser477. Over Ser478–Thr483 the chain is Extracellular. Residues Thr484–Val507 form a helical membrane-spanning segment. The Cytoplasmic segment spans residues Arg508 to Ala537. A helical membrane pass occupies residues Val538–Ile562. Over Gly563–Tyr572 the chain is Extracellular. A helical transmembrane segment spans residues Phe573 to Tyr590. Topologically, residues Pro591–Ile639 are cytoplasmic. Lys635 is covalently cross-linked (Glycyl lysine isopeptide (Lys-Gly) (interchain with G-Cter in ubiquitin)).

The protein belongs to the purine-cytosine permease (2.A.39) family.

Its subcellular location is the membrane. In terms of biological role, high-affinity transport of uridine. This is Uridine permease (FUI1) from Saccharomyces cerevisiae (strain ATCC 204508 / S288c) (Baker's yeast).